Here is a 330-residue protein sequence, read N- to C-terminus: Glycerol-3-phosphate dehydrogenase [NAD(P)+] 1 (330 aa).

3 residues coordinate NADPH: Trp15, Arg35, and Lys105. Lys105, Gly133, and Thr135 together coordinate sn-glycerol 3-phosphate. Ala137 is a binding site for NADPH. Lys188, Asp241, Ser251, Arg252, and Asn253 together coordinate sn-glycerol 3-phosphate. Lys188 serves as the catalytic Proton acceptor. Residue Arg252 participates in NADPH binding. NADPH contacts are provided by Ile276 and Glu278.

The protein belongs to the NAD-dependent glycerol-3-phosphate dehydrogenase family.

The protein resides in the cytoplasm. It catalyses the reaction sn-glycerol 3-phosphate + NAD(+) = dihydroxyacetone phosphate + NADH + H(+). It carries out the reaction sn-glycerol 3-phosphate + NADP(+) = dihydroxyacetone phosphate + NADPH + H(+). The protein operates within membrane lipid metabolism; glycerophospholipid metabolism. Catalyzes the reduction of the glycolytic intermediate dihydroxyacetone phosphate (DHAP) to sn-glycerol 3-phosphate (G3P), the key precursor for phospholipid synthesis. The chain is Glycerol-3-phosphate dehydrogenase [NAD(P)+] 1 from Sphingopyxis alaskensis (strain DSM 13593 / LMG 18877 / RB2256) (Sphingomonas alaskensis).